The primary structure comprises 431 residues: Serine/threonine-protein kinase Sgk1 (431 aa).

Positions 1-60 are necessary for localization to the mitochondria; sequence MTVKTEAARGPLTYSRMRGMVAILIAFMKQRRMGLNDFIQKIANNSYACKHTEVQSILKI. Positions 66–92 are disordered; sequence PELMNANPSPPPSPSQQINLGPSSNPH. A Phosphoserine modification is found at S74. S78 is subject to Phosphoserine; by MAPK7. Residues 81-91 are compositionally biased toward polar residues; sequence QQINLGPSSNP. A Protein kinase domain is found at 98 to 355; that stretch reads FHFLKVIGKG…FMEIRNHVFF (258 aa). ATP is bound by residues 104–112 and K127; that span reads IGKGSFGKV. Positions 131–141 match the Nuclear localization signal motif; that stretch reads KKAILKKKEEK. The active-site Proton acceptor is the D222. T256 carries the post-translational modification Phosphothreonine; by PDPK1. Positions 356–431 constitute an AGC-kinase C-terminal domain; the sequence is SLINWDDLIN…SYAPPMDSFL (76 aa). T369 bears the Phosphothreonine; by PKA mark. A phosphoserine mark is found at S397, S401, and S422.

It belongs to the protein kinase superfamily. AGC Ser/Thr protein kinase family. As to quaternary structure, homodimer; disulfide-linked. Forms a trimeric complex with FBXW7 and NOTCH1. Interacts with MAPK3/ERK1, MAPK1/ERK2, MAP2K1/MEK1, MAP2K2/MEK2, NEDD4, NEDD4L, MAPT/TAU, MAPK7, CREB1, SLC9A3R2/NHERF2 and KCNJ1/ROMK1. Associates with the mammalian target of rapamycin complex 2 (mTORC2) via an interaction with MAPKAP1/SIN1. Regulated by phosphorylation. Activated by phosphorylation on Ser-422 by mTORC2, transforming it into a substrate for PDPK1 which phosphorylates it on Thr-256. Phosphorylation on Ser-397 and Ser-401 are also essential for its activity. Phosphorylation on Ser-78 by MAPK7 is required for growth factor-induced cell cycle progression. Post-translationally, ubiquitinated by NEDD4L; which promotes proteasomal degradation. Ubiquitinated by SYVN1 at the endoplasmic reticulum; which promotes rapid proteasomal degradation and maintains a high turnover rate in resting cells.

The protein localises to the cytoplasm. It localises to the nucleus. The protein resides in the endoplasmic reticulum membrane. Its subcellular location is the cell membrane. It is found in the mitochondrion. The enzyme catalyses L-seryl-[protein] + ATP = O-phospho-L-seryl-[protein] + ADP + H(+). It catalyses the reaction L-threonyl-[protein] + ATP = O-phospho-L-threonyl-[protein] + ADP + H(+). With respect to regulation, two specific sites, one in the kinase domain (Thr-256) and the other in the C-terminal regulatory region (Ser-422), need to be phosphorylated for its full activation. Phosphorylation at Ser-397 and Ser-401 are also essential for its activity. Activated by WNK1, WNK2, WNK3 and WNK4; which promote phosphorylation by mTORC2. Serine/threonine-protein kinase which is involved in the regulation of a wide variety of ion channels, membrane transporters, cellular enzymes, transcription factors, neuronal excitability, cell growth, proliferation, survival, migration and apoptosis. Plays an important role in cellular stress response. Contributes to regulation of renal Na(+) retention, renal K(+) elimination, salt appetite, gastric acid secretion, intestinal Na(+)/H(+) exchange and nutrient transport, insulin-dependent salt sensitivity of blood pressure, salt sensitivity of peripheral glucose uptake, cardiac repolarization and memory consolidation. Up-regulates Na(+) channels: SCNN1A/ENAC, SCN5A and ASIC1/ACCN2, K(+) channels: KCNJ1/ROMK1, KCNA1-5, KCNQ1-5 and KCNE1, epithelial Ca(2+) channels: TRPV5 and TRPV6, chloride channels: BSND, CLCN2 and CFTR, glutamate transporters: SLC1A3/EAAT1, SLC1A2 /EAAT2, SLC1A1/EAAT3, SLC1A6/EAAT4 and SLC1A7/EAAT5, amino acid transporters: SLC1A5/ASCT2, SLC38A1/SN1 and SLC6A19, creatine transporter: SLC6A8, Na(+)/dicarboxylate cotransporter: SLC13A2/NADC1, Na(+)-dependent phosphate cotransporter: SLC34A2/NAPI-2B, glutamate receptor: GRIK2/GLUR6. Up-regulates carriers: SLC9A3/NHE3, SLC12A1/NKCC2, SLC12A3/NCC, SLC5A3/SMIT, SLC2A1/GLUT1, SLC5A1/SGLT1 and SLC15A2/PEPT2. Regulates enzymes: GSK3A/B, PMM2 and Na(+)/K(+) ATPase, and transcription factors: CTNNB1 and nuclear factor NF-kappa-B. Stimulates sodium transport into epithelial cells by enhancing the stability and expression of SCNN1A/ENAC. This is achieved by phosphorylating the NEDD4L ubiquitin E3 ligase, promoting its interaction with 14-3-3 proteins, thereby preventing it from binding to SCNN1A/ENAC and targeting it for degradation. Regulates store-operated Ca(+2) entry (SOCE) by stimulating ORAI1 and STIM1. Regulates KCNJ1/ROMK1 directly via its phosphorylation or indirectly via increased interaction with SLC9A3R2/NHERF2. Phosphorylates MDM2 and activates MDM2-dependent ubiquitination of p53/TP53. Phosphorylates MAPT/TAU and mediates microtubule depolymerization and neurite formation in hippocampal neurons. Phosphorylates SLC2A4/GLUT4 and up-regulates its activity. Phosphorylates APBB1/FE65 and promotes its localization to the nucleus. Phosphorylates MAPK1/ERK2 and activates it by enhancing its interaction with MAP2K1/MEK1 and MAP2K2/MEK2. Phosphorylates FBXW7 and plays an inhibitory role in the NOTCH1 signaling. Phosphorylates FOXO1 resulting in its relocalization from the nucleus to the cytoplasm. Phosphorylates FOXO3, promoting its exit from the nucleus and interference with FOXO3-dependent transcription. Phosphorylates BRAF and MAP3K3/MEKK3 and inhibits their activity. Phosphorylates SLC9A3/NHE3 in response to dexamethasone, resulting in its activation and increased localization at the cell membrane. Phosphorylates CREB1. Necessary for vascular remodeling during angiogenesis. The sequence is that of Serine/threonine-protein kinase Sgk1 (SGK1) from Oryctolagus cuniculus (Rabbit).